The primary structure comprises 2179 residues: Voltage-dependent L-type calcium channel subunit alpha-1D (2179 aa).

Disordered stretches follow at residues 1–21 (MMMM…EDHA), 30–49 (TRLP…SKQT), and 64–100 (KAAQ…SSNS). At 1–126 (MMMMMMMKKM…RACISIVEWK (126 aa)) the chain is on the cytoplasmic side. Residues 38–49 (GPTSQPNSSKQT) show a composition bias toward polar residues. Over residues 82 to 93 (QRKRQQYAKSKK) the composition is skewed to basic residues. One copy of the I repeat lies at 113-409 (NPIRRACISI…LVLGVLSGEF (297 aa)). A helical transmembrane segment spans residues 127 to 145 (PFDIFILLAIFANCVALAI). Topologically, residues 146-163 (YIPFPEDDSNSTNHNLEK) are extracellular. Residues 164 to 183 (VEYAFLIIFTVETFLKIIAY) form a helical membrane-spanning segment. The Cytoplasmic portion of the chain corresponds to 184–195 (GLLLHPNAYVRN). A helical membrane pass occupies residues 196–214 (GWNLLDFVIVIVGLFSVIL). Topologically, residues 215 to 235 (EQLTKETEGGNHSSGKSGGFD) are extracellular. Residues 236–254 (VKALRAFRVLRPLRLVSGV) traverse the membrane as a helical segment. Over 255–273 (PSLQVVLNSIIKAMVPLLH) the chain is Cytoplasmic. The chain crosses the membrane as a helical span at residues 274-293 (IALLVLFVIIIYAIIGLELF). Residues 294-381 (IGKMHKTCFF…WVNDAIGWEW (88 aa)) lie on the Extracellular side of the membrane. E364 contacts Ca(2+). The helical transmembrane segment at 382–406 (PWVYFVSLIILGSFFVLNLVLGVLS) threads the bilayer. Residues 407–543 (GEFSKEREKA…RRCRAAVKSV (137 aa)) lie on the Cytoplasmic side of the membrane. The tract at residues 429–446 (QQLEEDLKGYLDWITQAE) is binding to the beta subunit. The tract at residues 449–480 (DPENEEEGGEEGKRNTSMPTSETESVNTENVS) is disordered. Positions 463-479 (NTSMPTSETESVNTENV) are enriched in polar residues. The II repeat unit spans residues 529-775 (NRFNRRRCRA…VFLAIAVDNL (247 aa)). The helical transmembrane segment at 544 to 563 (TFYWLVIVLVFLNTLTISSE) threads the bilayer. At 564–578 (HYNQPDWLTQIQDIA) the chain is on the extracellular side. A helical transmembrane segment spans residues 579 to 597 (NKVLLALFTCEMLVKMYSL). At 598–605 (GLQAYFVS) the chain is on the cytoplasmic side. A helical transmembrane segment spans residues 606-624 (LFNRFDCFVVCGGITETIL). Residues 625–634 (VELELMSPLG) lie on the Extracellular side of the membrane. The chain crosses the membrane as a helical span at residues 635-653 (VSVFRCVRLLRIFKVTRHW). Topologically, residues 654 to 672 (TSLSNLVASLLNSMKSIAS) are cytoplasmic. The chain crosses the membrane as a helical span at residues 673–693 (LLLLLFLFIIIFSLLGMQLFG). The Extracellular portion of the chain corresponds to 694 to 747 (GKFNFDETQTKRSTFDNFPQALLTVFQILTGEDWNAVMYDGIMAYGGPSSSGMI). Residue E725 participates in Ca(2+) binding. Residues 748–772 (VCIYFIILFICGNYILLNVFLAIAV) traverse the membrane as a helical segment. Residues 771-810 (AVDNLADAESLNTAQKEEAEEKERKKIARKESLENKKNNK) are a coiled coil. The Cytoplasmic portion of the chain corresponds to 773 to 906 (DNLADAESLN…VGCHKLINHH (134 aa)). The span at 786–810 (KEEAEEKERKKIARKESLENKKNNK) shows a compositional bias: basic and acidic residues. Residues 786–870 (KEEAEEKERK…AGPRPRRISE (85 aa)) are disordered. Over residues 811-822 (PEVNQIANSDNK) the composition is skewed to polar residues. Residues 845-858 (VGEEEEEEEEDEPE) are compositionally biased toward acidic residues. The III repeat unit spans residues 893-1175 (NPIRVGCHKL…IFVGFVIVTF (283 aa)). The helical transmembrane segment at 907-925 (IFTNLILVFIMLSSAALAA) threads the bilayer. The Extracellular portion of the chain corresponds to 926-941 (EDPIRSHSFRNTILGY). Residues 942-961 (FDYAFTAIFTVEILLKMTTF) form a helical membrane-spanning segment. Residues 962 to 973 (GAFLHKGAFCRN) are Cytoplasmic-facing. A helical membrane pass occupies residues 974-992 (YFNLLDMLVVGVSLVSFGI). At 993-998 (QSSAIS) the chain is on the extracellular side. Residues 999–1018 (VVKILRVLRVLRPLRAINRA) form a helical membrane-spanning segment. Topologically, residues 1019–1037 (KGLKHVVQCVFVAIRTIGN) are cytoplasmic. The helical transmembrane segment at 1038–1057 (IMIVTTLLQFMFACIGVQLF) threads the bilayer. At 1058-1147 (KGKFYRCTDE…VGPVYNYRVE (90 aa)) the chain is on the extracellular side. The segment at 1095–1185 (RIWQNSDFNF…QEQGEKEYKN (91 aa)) is dihydropyridine binding. Ca(2+) is bound at residue E1121. Residues 1148 to 1168 (ISIFFIIYIIIVAFFMMNIFV) traverse the membrane as a helical segment. Topologically, residues 1169-1225 (GFVIVTFQEQGEKEYKNCELDKNQRQCVEYALKARPLRRYIPKNPYQYKFWYVVNSS) are cytoplasmic. The stretch at 1212 to 1487 (NPYQYKFWYV…LFVAVIMDNF (276 aa)) is one IV repeat. Residues 1226 to 1244 (PFEYMMFVLIMLNTLCLAM) traverse the membrane as a helical segment. Residues 1245 to 1259 (QHYEQSKMFNDAMDI) lie on the Extracellular side of the membrane. Residues 1260–1279 (LNMVFTGVFTVEMVLKVIAF) traverse the membrane as a helical segment. Residues 1280–1286 (KPKGYFS) lie on the Cytoplasmic side of the membrane. The helical transmembrane segment at 1287–1308 (DAWNTFDSLIVIGSIIDVALSE) threads the bilayer. Topologically, residues 1309-1333 (ADPSESETIPLPTATPGNSEESNRI) are extracellular. The chain crosses the membrane as a helical span at residues 1334–1353 (SITFFRLFRVMRLVKLLSRG). Residues 1354 to 1372 (EGIRTLLWTFIKSFQALPY) lie on the Cytoplasmic side of the membrane. The helical transmembrane segment at 1373 to 1392 (VALLIAMLFFIYAVIGMQMF) threads the bilayer. Residues 1393–1459 (GKVAMRDNNQ…GEEYTCGSNF (67 aa)) lie on the Extracellular side of the membrane. Residues 1440–1506 (LCDPDSDYNP…LGPHHLDEFK (67 aa)) form a dihydropyridine binding region. Residues 1452 to 1495 (EYTCGSNFAIVYFISFYMLCAFLIINLFVAVIMDNFDYLTRDWS) are phenylalkylamine binding. A helical transmembrane segment spans residues 1460–1484 (AIVYFISFYMLCAFLIINLFVAVIM). The Cytoplasmic portion of the chain corresponds to 1485–2179 (DNFDYLTRDW…ADEMICITTL (695 aa)). 3 disordered regions span residues 1704–1789 (LLGN…AHGK), 1896–1941 (FERP…RSSF), and 2135–2171 (GDMG…DLAD). Polar residues predominate over residues 1764–1782 (SIGKQAPTSTNANLNNANM). Residues 2156-2171 (SDEEPDPGREEEDLAD) are compositionally biased toward acidic residues.

This sequence belongs to the calcium channel alpha-1 subunit (TC 1.A.1.11) family. CACNA1D subfamily. As to quaternary structure, voltage-dependent calcium channels are multisubunit complexes, consisting of alpha-1, alpha-2, beta and delta subunits in a 1:1:1:1 ratio. The channel activity is directed by the pore-forming and voltage-sensitive alpha-1 subunit. In many cases, this subunit is sufficient to generate voltage-sensitive calcium channel activity. The auxiliary subunits beta and alpha-2/delta linked by a disulfide bridge regulate the channel activity. Interacts (via IQ domain) with CABP1 and CABP4 in a calcium independent manner. Interacts with RIMBP2. In terms of tissue distribution, expressed in the inner hair cells (IHC) of the cochlea.

It is found in the membrane. It catalyses the reaction Ca(2+)(in) = Ca(2+)(out). Functionally, voltage-sensitive calcium channels (VSCC) mediate the entry of calcium ions into excitable cells and are also involved in a variety of calcium-dependent processes, including muscle contraction, hormone or neurotransmitter release, gene expression, cell motility, cell division and cell death. The isoform alpha-1D gives rise to L-type calcium currents. Long-lasting (L-type) calcium channels belong to the 'high-voltage activated' (HVA) group. They are blocked by dihydropyridines (DHP), phenylalkylamines, and by benzothiazepines. This is Voltage-dependent L-type calcium channel subunit alpha-1D (Cacna1d) from Mus musculus (Mouse).